The primary structure comprises 190 residues: NDVDVVMDASSKPIFPGGEYYIMPAIWGPPGGGVRLAKTRNSDCPVTVLQDYGEVIFGQPVKFTLPGRGSGLIITNTPVEEFIKKPECASSSKWSVFVDDEIEKACVGIGGHEDHPGEQVFSGTFTIQKSRTPYNSYKLVFCESDSSTCSDIGRYDNNEGGRRLILTHHNPFQVVFMDASTFDGTIRSDG.

2 cysteine pairs are disulfide-bonded: C44/C88 and C142/C149.

It belongs to the protease inhibitor I3 (leguminous Kunitz-type inhibitor) family. In terms of assembly, forms active dimers on storage in aqueous solution, possibly through formation of an intermolecular disulfide bond. Post-translationally, the N-terminal Asn is removed in about 50% of both the CLSI-II and CLSI-III chains.

The protein localises to the secreted. Its function is as follows. Inhibits subtilisin-type microbial serine proteases incuding proteinase K, subtilisin BPN', subtilisin Carlsberg and subtilisin E in a non-stoichiometric manner. Weakly inhibits A.oryzae protease and some metalloproteases including pronase E. Does not inhibit trypsin, chymotrypsin, S.griseus alkaline protease or A.lyticus lysyl endopeptidase. CLSI-II has a wider inhibitory specificity than CLSI-III. In Canavalia lineata (Beach bean), this protein is Subtilisin inhibitor CLSI-II.